The chain runs to 1146 residues: Nitrogen permease regulator 3 (1146 aa).

The first 25 residues, 1 to 25 (MDECLPNSCLLGVHLVISTHSGPQI), serve as a signal peptide directing secretion. S76 bears the Phosphoserine mark. 4 disordered regions span residues 90-159 (AITP…LSDS), 177-221 (SSLS…SPQM), 237-340 (SGTN…HHYH), and 440-466 (GRWR…ISRK). Residues 105–123 (LPPTRSHANTVGSQSSIPA) show a composition bias toward polar residues. Low complexity-rich tracts occupy residues 150 to 159 (ETSSSGLSDS) and 177 to 196 (SSLS…SSSP). Polar residues-rich tracts occupy residues 201–221 (LSRT…SPQM), 237–253 (SGTN…SQNF), and 277–303 (KPSQ…AFTG). A compositionally biased stretch (low complexity) spans 304–315 (SCSISSKKSLSS). Polar residues predominate over residues 323–334 (LRNSSLNDTPGQ). Over residues 441-455 (RWRKSKHKNKTRSKR) the composition is skewed to basic residues. 2 positions are modified to phosphoserine: S486 and S987. The segment at 979-1047 (KTNTARRPSM…SRVDDRDDNE (69 aa)) is disordered. Basic and acidic residues-rich tracts occupy residues 986 to 1004 (PSMD…DGQS) and 1025 to 1042 (NNKD…RVDD).

It belongs to the NPR3 family. In terms of assembly, component of the SEA complex composed of at least IML1/SEA1, RTC1/SEA2, MTC5/SEA3, NPR2, NPR3, SEA4, SEC13 and SEH1. Forms a heterodimer with NPR2.

It localises to the vacuole membrane. Its function is as follows. Component of the SEA complex which coats the vacuolar membrane and is involved in intracellular trafficking, autophagy, response to nitrogen starvation, and amino acid biogenesis. Mediates inactivation of the TORC1 complex in response to amino acid starvation. Required for meiotic nuclear division. This is Nitrogen permease regulator 3 (NPR3) from Saccharomyces cerevisiae (strain ATCC 204508 / S288c) (Baker's yeast).